A 497-amino-acid polypeptide reads, in one-letter code: Probable malate:quinone oxidoreductase (497 aa).

It belongs to the MQO family. FAD serves as cofactor.

It carries out the reaction (S)-malate + a quinone = a quinol + oxaloacetate. Its pathway is carbohydrate metabolism; tricarboxylic acid cycle; oxaloacetate from (S)-malate (quinone route): step 1/1. The polypeptide is Probable malate:quinone oxidoreductase (Tolumonas auensis (strain DSM 9187 / NBRC 110442 / TA 4)).